The primary structure comprises 257 residues: Transmembrane protein 101 (257 aa).

8 consecutive transmembrane segments (helical) span residues 21 to 40, 52 to 72, 77 to 97, 110 to 130, 139 to 159, 182 to 202, 206 to 226, and 233 to 253; these read VLLT…LYAE, VPYL…MSFG, WFAL…YIGG, YSRT…AGEL, SLQS…AYSL, LFFV…YVTL, ILAV…AYWH, and FWNQ…AVIL.

The protein localises to the membrane. In terms of biological role, may activate NF-kappa-B signaling pathways. This is Transmembrane protein 101 (TMEM101) from Homo sapiens (Human).